Here is a 71-residue protein sequence, read N- to C-terminus: Protein SlyX homolog (71 aa).

Residues Arg52–Tyr71 form a disordered region.

This sequence belongs to the SlyX family.

The polypeptide is Protein SlyX homolog (Rhodopseudomonas palustris (strain ATCC BAA-98 / CGA009)).